Here is a 248-residue protein sequence, read N- to C-terminus: 14-3-3 protein zeta (248 aa).

It belongs to the 14-3-3 family. In terms of assembly, homodimer; homodimerization is not essential for modulating the activity of Slo. Interacts with phosphorylated Slob; the interaction with Slob mediates an indirect interaction with Slo. Interacts with phosphorylated yki. Interacts with hemo; this represses 14-3-3zeta activity which prevents the 14-3-3zeta-mediated activation of phosphoinositide 3-kinase Pi3K68D. This, in turn, inhibits the Pi3K68D-mediated conversion of phosphatidylinositol to phosphatidylinositol-3-phosphate and prevents progression of early endosomes through the maturation process which regulates subsequent steps of phagocytic processing. Interacts with REPTOR (when phosphorylated), this interaction may assist the cytoplasmic retention of REPTOR. As to expression, predominantly expressed in the ventral nerve cord of the embryo, and in the neural tissues of the head. Also found in the region posterior to the morphogenetic furrow of the eye imaginal disk where cells differentiate as photoreceptors.

The protein localises to the cytoplasm. It is found in the early endosome. Required in Raf-dependent cell proliferation and photoreceptor differentiation during eye development. Acts upstream of Raf and downstream of Ras, and is essential for viability. Acts as a negative regulator of the slo calcium channel via its interaction with slo-binding protein slob. Inhibits yki activity by restricting its nuclear localization. Binds to and promotes the activity of phosphoinositide 3-kinase Pi3K68D which converts phosphatidylinositol to phosphatidylinositol-3-phosphate and promotes maturation of early endosomes. The sequence is that of 14-3-3 protein zeta (14-3-3zeta) from Drosophila melanogaster (Fruit fly).